We begin with the raw amino-acid sequence, 172 residues long: uncharacterized protein (172 aa).

It belongs to the archaeal NMN adenylyltransferase family.

This is an uncharacterized protein from Aeropyrum pernix (strain ATCC 700893 / DSM 11879 / JCM 9820 / NBRC 100138 / K1).